The chain runs to 637 residues: Phosphomethylpyrimidine synthase (637 aa).

Residues N242, M271, Y300, H336, 356–358 (SRG), 397–400 (DGLR), and E436 each bind substrate. H440 contributes to the Zn(2+) binding site. Residue Y463 participates in substrate binding. H504 is a binding site for Zn(2+). The [4Fe-4S] cluster site is built by C584, C587, and C592.

It belongs to the ThiC family. Homodimer. The cofactor is [4Fe-4S] cluster.

It catalyses the reaction 5-amino-1-(5-phospho-beta-D-ribosyl)imidazole + S-adenosyl-L-methionine = 4-amino-2-methyl-5-(phosphooxymethyl)pyrimidine + CO + 5'-deoxyadenosine + formate + L-methionine + 3 H(+). It participates in cofactor biosynthesis; thiamine diphosphate biosynthesis. In terms of biological role, catalyzes the synthesis of the hydroxymethylpyrimidine phosphate (HMP-P) moiety of thiamine from aminoimidazole ribotide (AIR) in a radical S-adenosyl-L-methionine (SAM)-dependent reaction. In Bordetella avium (strain 197N), this protein is Phosphomethylpyrimidine synthase.